The following is a 142-amino-acid chain: Group IIE secretory phospholipase A2 (142 aa).

Positions 1–19 (MKSPHVLVFLCLLVALVTG) are cleaved as a signal peptide. Residues Asp41, Gly43, Tyr45, Gly47, and Gly49 each coordinate Ca(2+). Cystine bridges form between Cys44/Cys135, Cys46/Cys62, Cys61/Cys115, Cys67/Cys142, Cys68/Cys108, Cys77/Cys101, and Cys95/Cys106. The active site involves His65. Residue Asp66 coordinates Ca(2+). Asp109 is an active-site residue. Ca(2+) contacts are provided by Tyr130 and Asn132.

This sequence belongs to the phospholipase A2 family. Ca(2+) serves as cofactor. Restricted to the brain, heart, lung, and placenta.

It is found in the secreted. It localises to the cytoplasm. It carries out the reaction a 1,2-diacyl-sn-glycero-3-phosphoethanolamine + H2O = a 1-acyl-sn-glycero-3-phosphoethanolamine + a fatty acid + H(+). It catalyses the reaction 1-hexadecanoyl-2-(9Z-octadecenoyl)-sn-glycero-3-phosphoethanolamine + H2O = 1-hexadecanoyl-sn-glycero-3-phosphoethanolamine + (9Z)-octadecenoate + H(+). The catalysed reaction is 1-hexadecanoyl-2-(9Z,12Z-octadecadienoyl)-sn-glycero-3-phosphoethanolamine + H2O = 1-hexadecanoyl-sn-glycero-3-phosphoethanolamine + (9Z,12Z)-octadecadienoate + H(+). The enzyme catalyses 1-hexadecanoyl-2-(5Z,8Z,11Z,14Z-eicosatetraenoyl)-sn-glycero-3-phosphoethanolamine + H2O = 1-hexadecanoyl-sn-glycero-3-phosphoethanolamine + (5Z,8Z,11Z,14Z)-eicosatetraenoate + H(+). It carries out the reaction 1,2-dihexadecanoyl-sn-glycero-3-phospho-(1'-sn-glycerol) + H2O = 1-hexadecanoyl-sn-glycero-3-phospho-(1'-sn-glycerol) + hexadecanoate + H(+). It catalyses the reaction 1-hexadecanoyl-2-(9Z-octadecenoyl)-sn-glycero-3-phosphoglycerol + H2O = 1-hexadecanoyl-sn-glycero-3-phosphoglycerol + (9Z)-octadecenoate + H(+). The catalysed reaction is a 1,2-diacyl-sn-glycero-3-phosphocholine + H2O = a 1-acyl-sn-glycero-3-phosphocholine + a fatty acid + H(+). The enzyme catalyses 1,2-dihexadecanoyl-sn-glycero-3-phosphocholine + H2O = 1-hexadecanoyl-sn-glycero-3-phosphocholine + hexadecanoate + H(+). It carries out the reaction 1-hexadecanoyl-2-(9Z-octadecenoyl)-sn-glycero-3-phosphocholine + H2O = 1-hexadecanoyl-sn-glycero-3-phosphocholine + (9Z)-octadecenoate + H(+). It catalyses the reaction 1-hexadecanoyl-2-(9Z,12Z-octadecadienoyl)-sn-glycero-3-phosphocholine + H2O = (9Z,12Z)-octadecadienoate + 1-hexadecanoyl-sn-glycero-3-phosphocholine + H(+). The catalysed reaction is 1-hexadecanoyl-2-(4Z,7Z,10Z,13Z,16Z,19Z-docosahexaenoyl)-sn-glycero-3-phosphocholine + H2O = (4Z,7Z,10Z,13Z,16Z,19Z)-docosahexaenoate + 1-hexadecanoyl-sn-glycero-3-phosphocholine + H(+). Secretory calcium-dependent phospholipase A2 that primarily targets extracellular phospholipids. Hydrolyzes the ester bond of the fatty acyl group attached at sn-2 position of phospholipids (phospholipase A2 activity), releasing various unsaturated fatty acids including oleoate, linoleoate, arachidonate, docosahexaenoate and lysophosphatidylethanolamines in preference to lysophosphatidylcholines. In response to high-fat diet, hydrolyzes minor lipoprotein phospholipids including phosphatidylserines, phosphatidylinositols and phosphatidylglycerols, altering lipoprotein composition and fat storage in adipose tissue and liver. May act in an autocrine and paracrine manner. Contributes to lipid remodeling of cellular membranes and generation of lipid mediators involved in pathogen clearance. Cleaves sn-2 fatty acyl chains of phosphatidylglycerols and phosphatidylethanolamines, which are major components of membrane phospholipids in bacteria. Acts as a hair follicle phospholipase A2. Selectively releases lysophosphatidylethanolamines (LPE) and various unsaturated fatty acids in skin to regulate hair follicle homeostasis. May regulate the inflammatory response by releasing arachidonate, a precursor of prostaglandins and leukotrienes. Upon allergen exposure, may participate in allergic inflammatory response by enhancing leukotriene C4 synthesis and degranulation in mast cells. In Homo sapiens (Human), this protein is Group IIE secretory phospholipase A2 (PLA2G2E).